Consider the following 454-residue polypeptide: Ornithine aminotransferase (454 aa).

3 residues coordinate pyridoxal 5'-phosphate: Gly124, Thr125, and Gln267. At Lys293 the chain carries N6-(pyridoxal phosphate)lysine. Thr321 contacts pyridoxal 5'-phosphate.

The protein belongs to the class-III pyridoxal-phosphate-dependent aminotransferase family. As to quaternary structure, homotetramer; dimer of dimers. Pyridoxal 5'-phosphate serves as cofactor.

It carries out the reaction L-ornithine + 2-oxoglutarate = L-glutamate 5-semialdehyde + L-glutamate. The catalysed reaction is L-lysine + 2-oxoglutarate = (S)-2-amino-6-oxohexanoate + L-glutamate. Functionally, catalyzes the conversion of L-ornithine and 2-oxoglutarate to L-glutamate semialdehyde and L-glutamate. L-ornithine is the best substrate, but the enzyme also shows good activity toward L-lysine, and low activity toward D-ornithine, D-lysine, 5-aminovalerate, 6-aminohexanoate and GABA. The enzyme activity is specific for 2-oxoglutarate. The chain is Ornithine aminotransferase from Pyrococcus horikoshii (strain ATCC 700860 / DSM 12428 / JCM 9974 / NBRC 100139 / OT-3).